The following is a 1205-amino-acid chain: ATP-dependent DNA helicase MER3 homolog (1205 aa).

A Helicase ATP-binding domain is found at 41-236 (PACFLSDVNM…WLAVPSEGIK (196 aa)). 54 to 61 (APTGSGKT) serves as a coordination point for ATP. Residues 172–175 (DEVH) carry the DEAH box motif. The region spanning 266 to 467 (RLQSFIFDIL…CAVEHLNAEI (202 aa)) is the Helicase C-terminal domain. An SEC63 domain is found at 541-852 (PLEPGRLMTK…FEEYVGLDIH (312 aa)). Over residues 1075–1091 (QKSEILNRTQGKNSTQL) the composition is skewed to polar residues. The segment at 1075 to 1131 (QKSEILNRTQGKNSTQLAGKKAFEKSKTPDENSLHFVGKRDSSSEKSKALSKTPDEN) is disordered. A compositionally biased stretch (basic and acidic residues) spans 1095 to 1122 (KAFEKSKTPDENSLHFVGKRDSSSEKSK).

This sequence belongs to the helicase family. SKI2 subfamily. In terms of tissue distribution, transcribed preferentially in early stages of meiocyte development and during meiosis in young flowers.

It is found in the nucleus. The protein resides in the chromosome. It catalyses the reaction Couples ATP hydrolysis with the unwinding of duplex DNA by translocating in the 3'-5' direction.. It carries out the reaction ATP + H2O = ADP + phosphate + H(+). DNA helicase required for crossover formation, complete synapsis of homologous chromosomes and bivalent formation during meiosis. Is specific to recombination events resulting in interference-sensitive crossovers (class I meiotic crossover). Works cooperatively with ZIP4 to promote crossovers. The sequence is that of ATP-dependent DNA helicase MER3 homolog from Oryza sativa subsp. japonica (Rice).